We begin with the raw amino-acid sequence, 249 residues long: Acetylglutamate kinase (249 aa).

Substrate-binding positions include 38-39, Arg-60, and Asn-147; that span reads GG.

This sequence belongs to the acetylglutamate kinase family. ArgB subfamily.

The protein localises to the cytoplasm. It catalyses the reaction N-acetyl-L-glutamate + ATP = N-acetyl-L-glutamyl 5-phosphate + ADP. Its pathway is amino-acid biosynthesis; L-arginine biosynthesis; N(2)-acetyl-L-ornithine from L-glutamate: step 2/4. Functionally, catalyzes the ATP-dependent phosphorylation of N-acetyl-L-glutamate. This is Acetylglutamate kinase from Deinococcus radiodurans (strain ATCC 13939 / DSM 20539 / JCM 16871 / CCUG 27074 / LMG 4051 / NBRC 15346 / NCIMB 9279 / VKM B-1422 / R1).